A 745-amino-acid chain; its full sequence is Probable GMP synthase [glutamine-hydrolyzing] (745 aa).

The interval 1–37 is disordered; it reads MKRSSSMLDINEDSQHSTNKAPPPKKAPEDRFDSANM. The region spanning 60–252 is the Glutamine amidotransferase type-1 domain; sequence RIAILDFGAQ…LFKVVGCCGN (193 aa). The active-site For GATase activity is the Cys138. Active-site residues include His226 and Glu228. The GMPS ATP-PPase domain maps to 253 to 461; that stretch reads FTIQNREQSC…LGLPESIVQR (209 aa). 280–286 contributes to the ATP binding site; sequence SGGVDSA. Substrate-binding residues include Arg363, Asp563, Gln662, Lys737, and Glu743.

As to quaternary structure, homodimer.

The catalysed reaction is XMP + L-glutamine + ATP + H2O = GMP + L-glutamate + AMP + diphosphate + 2 H(+). The protein operates within purine metabolism; GMP biosynthesis; GMP from XMP (L-Gln route): step 1/1. The sequence is that of Probable GMP synthase [glutamine-hydrolyzing] (gmps-1) from Caenorhabditis elegans.